Reading from the N-terminus, the 348-residue chain is Dihydroorotase (348 aa).

2 residues coordinate Zn(2+): His17 and His19. Residues 19-21 (HLR) and Asn45 contribute to the substrate site. The Zn(2+) site is built by Lys103, His140, and His178. Lys103 carries the post-translational modification N6-carboxylysine. His140 contributes to the substrate binding site. Leu223 serves as a coordination point for substrate. Residue Asp251 participates in Zn(2+) binding. The active site involves Asp251. Substrate is bound by residues His255 and Ala267.

It belongs to the metallo-dependent hydrolases superfamily. DHOase family. Class II DHOase subfamily. In terms of assembly, homodimer. Zn(2+) serves as cofactor. The cofactor is Co(2+). It depends on Mg(2+) as a cofactor. Ni(2+) is required as a cofactor.

It carries out the reaction (S)-dihydroorotate + H2O = N-carbamoyl-L-aspartate + H(+). It functions in the pathway pyrimidine metabolism; UMP biosynthesis via de novo pathway; (S)-dihydroorotate from bicarbonate: step 3/3. Catalyzes the reversible cyclization of carbamoyl aspartate to dihydroorotate. This Klebsiella pneumoniae subsp. pneumoniae (strain ATCC 700721 / MGH 78578) protein is Dihydroorotase.